A 470-amino-acid chain; its full sequence is Light-independent protochlorophyllide reductase subunit N (470 aa).

Positions 23, 48, and 108 each coordinate [4Fe-4S] cluster.

The protein belongs to the BchN/ChlN family. Protochlorophyllide reductase is composed of three subunits; ChlL, ChlN and ChlB. Forms a heterotetramer of two ChlB and two ChlN subunits. The cofactor is [4Fe-4S] cluster.

The protein resides in the plastid. Its subcellular location is the chloroplast. The enzyme catalyses chlorophyllide a + oxidized 2[4Fe-4S]-[ferredoxin] + 2 ADP + 2 phosphate = protochlorophyllide a + reduced 2[4Fe-4S]-[ferredoxin] + 2 ATP + 2 H2O. It functions in the pathway porphyrin-containing compound metabolism; chlorophyll biosynthesis (light-independent). Functionally, component of the dark-operative protochlorophyllide reductase (DPOR) that uses Mg-ATP and reduced ferredoxin to reduce ring D of protochlorophyllide (Pchlide) to form chlorophyllide a (Chlide). This reaction is light-independent. The NB-protein (ChlN-ChlB) is the catalytic component of the complex. The protein is Light-independent protochlorophyllide reductase subunit N of Zygnema circumcarinatum (Green alga).